The chain runs to 241 residues: Chaperone protein HifB (241 aa).

A signal peptide spans Met1–Asn27.

It belongs to the periplasmic pilus chaperone family.

Its subcellular location is the periplasm. In terms of biological role, mediates assembly of pili by forming soluble multimeric complexes with pili subunits as an intermediate step in the assembly process. This protein is involved in type B pili (HifA) assembly. The polypeptide is Chaperone protein HifB (hifB) (Haemophilus influenzae).